The primary structure comprises 509 residues: Histidine--tRNA ligase, cytoplasmic (509 aa).

Residue Ala2 is modified to N-acetylalanine. One can recognise a WHEP-TRS domain in the interval 3 to 59; it reads DRAALEDLVRVQGERVRGLKQQKASAEQIEEEVAKLLKLKAQLGPDEGKPKFVLKTP. Ser66 bears the Phosphoserine mark. L-histidine is bound by residues 130–132, Arg157, Gln173, Asp177, Arg326, and 330–331; these read DLT and YY. Ser356 bears the Phosphoserine mark.

The protein belongs to the class-II aminoacyl-tRNA synthetase family. In terms of assembly, homodimer.

The protein localises to the cytoplasm. It carries out the reaction tRNA(His) + L-histidine + ATP = L-histidyl-tRNA(His) + AMP + diphosphate + H(+). Catalyzes the ATP-dependent ligation of histidine to the 3'-end of its cognate tRNA, via the formation of an aminoacyl-adenylate intermediate (His-AMP). Plays a role in axon guidance. The polypeptide is Histidine--tRNA ligase, cytoplasmic (HARS1) (Bos taurus (Bovine)).